A 137-amino-acid polypeptide reads, in one-letter code: Large ribosomal subunit protein uL16 (137 aa).

A compositionally biased stretch (basic residues) spans 1 to 17 (MLQPKRTKFRKQQKGRN). A disordered region spans residues 1–21 (MLQPKRTKFRKQQKGRNRGQA).

The protein belongs to the universal ribosomal protein uL16 family. In terms of assembly, part of the 50S ribosomal subunit.

Binds 23S rRNA and is also seen to make contacts with the A and possibly P site tRNAs. In Nitrosococcus oceani (strain ATCC 19707 / BCRC 17464 / JCM 30415 / NCIMB 11848 / C-107), this protein is Large ribosomal subunit protein uL16.